A 297-amino-acid polypeptide reads, in one-letter code: MKDEFGREIRSFRLSITPECNLKCFYCHREGRTEENGKLMSPDEIGKIVSASLEFGVRKIKISGGEPLVRKDLPKIIQNIKNDQIKDISLTTNGILLEKCAEDLKKAGLNRVNVSLDTLNPKKYKEITGGDVEKVKRGIEKAIFLGLTPLKVNFLAMDITLNDLSEVMDYCKKVGAILQIIEFIPVDPNLKHHHIDITPIEEEIAKKSEKVVTRKFMQNRKKYILDGLEIEFVRPMDNTEFCGHCTRIRLTYDGFLKPCLLRDDNLVDVVTPLRNEESIRSYFIKCIKNREPFCKAE.

Residues 4–220 (EFGREIRSFR…VVTRKFMQNR (217 aa)) form the Radical SAM core domain. R13 lines the GTP pocket. 2 residues coordinate [4Fe-4S] cluster: C20 and C24. Residue Y26 participates in S-adenosyl-L-methionine binding. C27 contacts [4Fe-4S] cluster. K61 is a GTP binding site. S-adenosyl-L-methionine is bound at residue G65. Position 91 (T91) interacts with GTP. S-adenosyl-L-methionine is bound at residue S115. K151 lines the GTP pocket. [4Fe-4S] cluster contacts are provided by C242 and C245. 247 to 249 (RIR) provides a ligand contact to GTP. Residue C259 participates in [4Fe-4S] cluster binding.

It belongs to the radical SAM superfamily. MoaA family. It depends on [4Fe-4S] cluster as a cofactor.

The enzyme catalyses GTP + AH2 + S-adenosyl-L-methionine = (8S)-3',8-cyclo-7,8-dihydroguanosine 5'-triphosphate + 5'-deoxyadenosine + L-methionine + A + H(+). It participates in cofactor biosynthesis; molybdopterin biosynthesis. Its function is as follows. Catalyzes the cyclization of GTP to (8S)-3',8-cyclo-7,8-dihydroguanosine 5'-triphosphate. This is Probable GTP 3',8-cyclase from Methanococcus vannielii (strain ATCC 35089 / DSM 1224 / JCM 13029 / OCM 148 / SB).